We begin with the raw amino-acid sequence, 312 residues long: Putative S-adenosyl-L-methionine-dependent methyltransferase Mjls_0078 (312 aa).

S-adenosyl-L-methionine-binding positions include Asp134 and 163 to 164 (DL).

The protein belongs to the UPF0677 family.

In terms of biological role, exhibits S-adenosyl-L-methionine-dependent methyltransferase activity. The protein is Putative S-adenosyl-L-methionine-dependent methyltransferase Mjls_0078 of Mycobacterium sp. (strain JLS).